A 70-amino-acid chain; its full sequence is Large ribosomal subunit protein uL29 (70 aa).

It belongs to the universal ribosomal protein uL29 family.

The chain is Large ribosomal subunit protein uL29 from Prochlorococcus marinus (strain MIT 9313).